We begin with the raw amino-acid sequence, 79 residues long: U-actitoxin-Avd8b (79 aa).

Positions 1–19 (MKSLVIVFVVLLGVAMISA) are cleaved as a signal peptide. A propeptide spanning residues 20–36 (NEEELLAILQDQRNDAR) is cleaved from the precursor.

Belongs to the sea anemone 8 toxin family.

The protein localises to the secreted. It localises to the nematocyst. This chain is U-actitoxin-Avd8b, found in Anemonia viridis (Snakelocks anemone).